The primary structure comprises 288 residues: Movement protein (288 aa).

This sequence belongs to the cucumovirus movement protein family.

The protein resides in the host cell junction. Its subcellular location is the host plasmodesma. Transports viral genome to neighboring plant cells directly through plasmosdesmata, without any budding. The movement protein allows efficient cell to cell propagation, by bypassing the host cell wall barrier. Acts by forming a tubular structure at the host plasmodesmata, enlarging it enough to allow free passage of virion capsids. This chain is Movement protein, found in Apium graveolens (Celery).